A 264-amino-acid polypeptide reads, in one-letter code: Ribonuclease HII (264 aa).

The region spanning 33–224 (GPVAGVDEVG…VRRVASGSNT (192 aa)) is the RNase H type-2 domain. A divalent metal cation-binding residues include D39, E40, and D133. Positions 222-264 (SNTAEVADGQPDPRDGTAQTGEGRWSKSSHPATMRATGRAQGT) are disordered.

The protein belongs to the RNase HII family. Requires Mn(2+) as cofactor. The cofactor is Mg(2+).

It is found in the cytoplasm. The enzyme catalyses Endonucleolytic cleavage to 5'-phosphomonoester.. Functionally, endonuclease that specifically degrades the RNA of RNA-DNA hybrids. The chain is Ribonuclease HII from Mycobacterium bovis (strain ATCC BAA-935 / AF2122/97).